A 93-amino-acid chain; its full sequence is Small ribosomal subunit protein uS19 (93 aa).

It belongs to the universal ribosomal protein uS19 family.

Functionally, protein S19 forms a complex with S13 that binds strongly to the 16S ribosomal RNA. The sequence is that of Small ribosomal subunit protein uS19 from Lacticaseibacillus paracasei (strain ATCC 334 / BCRC 17002 / CCUG 31169 / CIP 107868 / KCTC 3260 / NRRL B-441) (Lactobacillus paracasei).